The sequence spans 272 residues: Hydroxyethylthiazole kinase (272 aa).

Residue Met-46 participates in substrate binding. 2 residues coordinate ATP: Arg-122 and Thr-168. Gly-195 contributes to the substrate binding site.

This sequence belongs to the Thz kinase family. Mg(2+) is required as a cofactor.

It carries out the reaction 5-(2-hydroxyethyl)-4-methylthiazole + ATP = 4-methyl-5-(2-phosphooxyethyl)-thiazole + ADP + H(+). Its pathway is cofactor biosynthesis; thiamine diphosphate biosynthesis; 4-methyl-5-(2-phosphoethyl)-thiazole from 5-(2-hydroxyethyl)-4-methylthiazole: step 1/1. In terms of biological role, catalyzes the phosphorylation of the hydroxyl group of 4-methyl-5-beta-hydroxyethylthiazole (THZ). This chain is Hydroxyethylthiazole kinase, found in Alkaliphilus metalliredigens (strain QYMF).